Here is a 486-residue protein sequence, read N- to C-terminus: MTDLVKLTIAQSHKLLKDRKISSAELTKAHLERIEKLEPEIKAFMTVCPETALSQAEAADKAIKQGDIRPLTGIPMALKDVLCTKGIRTTCSSKMLENFVPPYNAHVVDKLAKEGAVLLGKTNMDEFAMGSSTENSAYFTTRNPWNTDKVPGGSSGGSAACVAASEAVFSLGSDTGGSIRQPASFCSVTGYKPSYGMVSRYGLVAFASSLDQIGPFTKDAMDCALVMNAIAGFDDRDSTSVPQTVPDFNSGLDGNIKGFKLGVPKEYFSQNMRPDITEKINDALGVLSGLGASIDREVSLPHTPYALAVYYILAPSEASANLSRYDGVKYGYSYNQTENMWEAMEKTRAKGFGSEVKRRIMIGTYALSAGYYDAWYVKAQKVRTLISQEFNNAFEKYDALITPTTPNLPFSIGEKLNDPFEMYMCDTCTIPINIAGLPAVSIPAGFVDGLPVGLQIIGKPFADQTIMRIAHAFQCATTWHKETPRL.

Catalysis depends on charge relay system residues Lys79 and Ser154. The Acyl-ester intermediate role is filled by Ser178.

The protein belongs to the amidase family. GatA subfamily. As to quaternary structure, heterotrimer of A, B and C subunits.

The enzyme catalyses L-glutamyl-tRNA(Gln) + L-glutamine + ATP + H2O = L-glutaminyl-tRNA(Gln) + L-glutamate + ADP + phosphate + H(+). In terms of biological role, allows the formation of correctly charged Gln-tRNA(Gln) through the transamidation of misacylated Glu-tRNA(Gln) in organisms which lack glutaminyl-tRNA synthetase. The reaction takes place in the presence of glutamine and ATP through an activated gamma-phospho-Glu-tRNA(Gln). This chain is Glutamyl-tRNA(Gln) amidotransferase subunit A, found in Dehalococcoides mccartyi (strain CBDB1).